The following is a 265-amino-acid chain: HTH-type transcriptional activator CfaD (265 aa).

The region spanning 164 to 261 is the HTH araC/xylS-type domain; the sequence is DKVRNVIEKD…GVTPKQFFTY (98 aa). DNA-binding regions (H-T-H motif) lie at residues 181–202 and 228–251; these read GIIADAFNVSEITIRKRLESEN and ISQISNMIGISSASYFIRVFNKHY.

In terms of assembly, homodimer.

Transcriptional activator of the CFA/I adhesin (cfaA and cfaB) genes of enterotoxigenic E.coli at 37 degrees Celsius. Also represses the silencing effect of H-NS (hns). This Escherichia coli protein is HTH-type transcriptional activator CfaD.